The sequence spans 332 residues: uncharacterized protein (332 aa).

Acidic residues-rich tracts occupy residues 290–314 and 323–332; these read EDIDDIDDSDESDDSDDSEDSDSFG and EDSEDSDNSE. A disordered region spans residues 290-332; the sequence is EDIDDIDDSDESDDSDDSEDSDSFGDSDSSGNSEDSEDSDNSE.

Belongs to the mimivirus L17x/L18x family.

This is an uncharacterized protein from Acanthamoeba polyphaga mimivirus (APMV).